We begin with the raw amino-acid sequence, 927 residues long: Isoleucine--tRNA ligase (927 aa).

The 'HIGH' region motif lies at 60–70; that stretch reads PYANGNIHLGH. Glutamate 557 serves as a coordination point for L-isoleucyl-5'-AMP. Positions 598 to 602 match the 'KMSKS' region motif; that stretch reads KMSKS. Lysine 601 contacts ATP. Positions 895, 898, 915, and 918 each coordinate Zn(2+).

This sequence belongs to the class-I aminoacyl-tRNA synthetase family. IleS type 1 subfamily. In terms of assembly, monomer. Zn(2+) is required as a cofactor.

Its subcellular location is the cytoplasm. The enzyme catalyses tRNA(Ile) + L-isoleucine + ATP = L-isoleucyl-tRNA(Ile) + AMP + diphosphate. Catalyzes the attachment of isoleucine to tRNA(Ile). As IleRS can inadvertently accommodate and process structurally similar amino acids such as valine, to avoid such errors it has two additional distinct tRNA(Ile)-dependent editing activities. One activity is designated as 'pretransfer' editing and involves the hydrolysis of activated Val-AMP. The other activity is designated 'posttransfer' editing and involves deacylation of mischarged Val-tRNA(Ile). In Syntrophomonas wolfei subsp. wolfei (strain DSM 2245B / Goettingen), this protein is Isoleucine--tRNA ligase.